Reading from the N-terminus, the 380-residue chain is Lipid-A-disaccharide synthase (380 aa).

Belongs to the LpxB family.

It carries out the reaction a lipid X + a UDP-2-N,3-O-bis[(3R)-3-hydroxyacyl]-alpha-D-glucosamine = a lipid A disaccharide + UDP + H(+). Its pathway is bacterial outer membrane biogenesis; LPS lipid A biosynthesis. Functionally, condensation of UDP-2,3-diacylglucosamine and 2,3-diacylglucosamine-1-phosphate to form lipid A disaccharide, a precursor of lipid A, a phosphorylated glycolipid that anchors the lipopolysaccharide to the outer membrane of the cell. The sequence is that of Lipid-A-disaccharide synthase from Pseudomonas savastanoi pv. phaseolicola (strain 1448A / Race 6) (Pseudomonas syringae pv. phaseolicola (strain 1448A / Race 6)).